Here is a 399-residue protein sequence, read N- to C-terminus: Serine palmitoyltransferase (399 aa).

Residues 113–114 (GF), H213, T241, and S243 contribute to the pyridoxal 5'-phosphate site. The residue at position 244 (K244) is an N6-(pyridoxal phosphate)lysine.

Belongs to the class-II pyridoxal-phosphate-dependent aminotransferase family. In terms of assembly, homodimer. It depends on pyridoxal 5'-phosphate as a cofactor.

Its subcellular location is the cytoplasm. It is found in the cell inner membrane. The enzyme catalyses L-serine + hexadecanoyl-CoA + H(+) = 3-oxosphinganine + CO2 + CoA. It functions in the pathway lipid metabolism; sphingolipid metabolism. In terms of biological role, catalyzes the condensation of L-serine with palmitoyl-CoA (hexadecanoyl-CoA) to produce 3-oxosphinganine. Exhibits a broad substrate specificity concerning the chain length and the degree of unsaturation of acyl-CoA. This chain is Serine palmitoyltransferase, found in Sphingobacterium multivorum.